Here is a 1008-residue protein sequence, read N- to C-terminus: SKI family transcriptional corepressor 2 (1008 aa).

Disordered stretches follow at residues 280 to 315 and 514 to 927; these read HLLG…DDDD and EPGG…KKDV. Pro residues-rich tracts occupy residues 284–294 and 525–534; these read APPPPPPPPPL and APPPGQPPPV. Composition is skewed to low complexity over residues 535 to 544 and 578 to 595; these read VANGPGSGPP and GVTS…SVGT. A compositionally biased stretch (basic and acidic residues) spans 626-635; sequence GGKDDAESLA. Residues 649-666 are compositionally biased toward basic residues; it reads PAHHHHHHHHPHHHHHHP. Positions 691–703 are enriched in pro residues; the sequence is APPPPPPPPPLAP. 2 stretches are compositionally biased toward acidic residues: residues 724-739 and 748-766; these read DSSE…QEVD and GEEE…EDEE. The span at 787–797 shows a compositional bias: basic and acidic residues; that stretch reads LSEKGSGRDRT. Positions 842–855 are enriched in low complexity; the sequence is SSSGGSRPGSPVHH. Composition is skewed to basic and acidic residues over residues 856-872, 880-890, and 905-915; these read PSLE…KPKE, TKDDNFSDKNK, and FWRERSGEHTQ.

Belongs to the SKI family. Interacts with SMAD2 and SMAD3. Expression is restricted to adult and embryonic central nervous system. Expressed at high levels in the developing cerebellum, ventral metencephalon and myelencephalon at 12.5 dpc (at protein level). In the adult cerebellum, expressed specifically in Purkinje cells.

The protein resides in the nucleus. Its subcellular location is the cytoplasm. Acts as a TGF-beta antagonist in the nervous system. Exhibits transcriptional repressor activity. The protein is SKI family transcriptional corepressor 2 of Mus musculus (Mouse).